The following is a 174-amino-acid chain: Male-enhanced antigen 1 (174 aa).

Disordered regions lie at residues 1–77 (MAAV…PVGD) and 94–123 (LHLP…IPMD). Composition is skewed to acidic residues over residues 38-48 (SSEEPEEEQEE), 65-77 (PEQE…PVGD), and 101-110 (LESEDEDEEG). Ser103 is modified (phosphoserine).

In terms of biological role, may play an important role in spermatogenesis and/or testis development. This is Male-enhanced antigen 1 (MEA1) from Sus scrofa (Pig).